Reading from the N-terminus, the 920-residue chain is Translation initiation factor IF-2 (920 aa).

Basic and acidic residues-rich tracts occupy residues 149 to 175 (EAEM…EKPV), 186 to 197 (AEKKATADKAAK), and 255 to 265 (AKPEGADDKKK). Disordered stretches follow at residues 149–197 (EAEM…KAAK) and 245–319 (EAKK…KQRQ). Over residues 301–311 (SSGGVGGWRSG) the composition is skewed to gly residues. The tr-type G domain occupies 418–585 (PRPPVVTVMG…NVLLQAEILE (168 aa)). The tract at residues 427–434 (GHVDHGKT) is G1. 427–434 (GHVDHGKT) contributes to the GTP binding site. The tract at residues 452–456 (GITQH) is G2. The G3 stretch occupies residues 473-476 (DTPG). GTP contacts are provided by residues 473-477 (DTPGH) and 527-530 (NKID). The interval 527–530 (NKID) is G4. A G5 region spans residues 563-565 (SAK).

It belongs to the TRAFAC class translation factor GTPase superfamily. Classic translation factor GTPase family. IF-2 subfamily.

Its subcellular location is the cytoplasm. In terms of biological role, one of the essential components for the initiation of protein synthesis. Protects formylmethionyl-tRNA from spontaneous hydrolysis and promotes its binding to the 30S ribosomal subunits. Also involved in the hydrolysis of GTP during the formation of the 70S ribosomal complex. The protein is Translation initiation factor IF-2 of Polynucleobacter asymbioticus (strain DSM 18221 / CIP 109841 / QLW-P1DMWA-1) (Polynucleobacter necessarius subsp. asymbioticus).